The sequence spans 82 residues: Small ribosomal subunit protein bS18 (82 aa).

Polar residues predominate over residues 1-10 (MTDTNQNSSR). The disordered stretch occupies residues 1–21 (MTDTNQNSSRRPFHRRRKTCP).

This sequence belongs to the bacterial ribosomal protein bS18 family. Part of the 30S ribosomal subunit. Forms a tight heterodimer with protein bS6.

Its function is as follows. Binds as a heterodimer with protein bS6 to the central domain of the 16S rRNA, where it helps stabilize the platform of the 30S subunit. This Bartonella tribocorum (strain CIP 105476 / IBS 506) protein is Small ribosomal subunit protein bS18.